The chain runs to 34 residues: Protamine (34 aa).

A disordered region spans residues 1 to 34 (PRRRRQASRPVRRRRRTRRSTAERRRRRVVRRRR).

As to expression, testis.

The protein localises to the nucleus. It localises to the chromosome. Functionally, protamines substitute for histones in the chromatin of sperm during the haploid phase of spermatogenesis. They compact sperm DNA into a highly condensed, stable and inactive complex. The chain is Protamine from Dicentrarchus labrax (European seabass).